The primary structure comprises 270 residues: Extracellular metalloprotease MCYG_04966 (270 aa).

Positions M1–A19 are cleaved as a signal peptide. N135 is a glycosylation site (N-linked (GlcNAc...) asparagine). H184 is a Zn(2+) binding site. The active site involves E185. H188 provides a ligand contact to Zn(2+). N199 carries an N-linked (GlcNAc...) asparagine glycan. The tract at residues V208–S227 is disordered. The span at P212–S227 shows a compositional bias: polar residues. C221 and C247 are joined by a disulfide.

The protein belongs to the peptidase M43B family.

It localises to the secreted. Its function is as follows. Secreted metalloproteinase that allows assimilation of proteinaceous substrates. Plays a pivotal role as a pathogenicity determinant during infections and contributes to the ability of the pathogen to persist within the mammalian host. The polypeptide is Extracellular metalloprotease MCYG_04966 (Arthroderma otae (strain ATCC MYA-4605 / CBS 113480) (Microsporum canis)).